Here is a 301-residue protein sequence, read N- to C-terminus: GTPase Era (301 aa).

The 168-residue stretch at Lys6 to Ile173 folds into the Era-type G domain. Positions Gly14–Ser21 are G1. Residue Gly14–Ser21 participates in GTP binding. The segment at Gln40–Asn44 is G2. Residues Asp61 to Gly64 are G3. Residues Asp61–Ile65 and Asn123–Asp126 contribute to the GTP site. The tract at residues Asn123–Asp126 is G4. Residues Ile152 to Ala154 form a G5 region. One can recognise a KH type-2 domain in the interval Thr204–Lys282.

This sequence belongs to the TRAFAC class TrmE-Era-EngA-EngB-Septin-like GTPase superfamily. Era GTPase family. As to quaternary structure, monomer.

Its subcellular location is the cytoplasm. The protein resides in the cell membrane. An essential GTPase that binds both GDP and GTP, with rapid nucleotide exchange. Plays a role in 16S rRNA processing and 30S ribosomal subunit biogenesis and possibly also in cell cycle regulation and energy metabolism. The protein is GTPase Era of Listeria innocua serovar 6a (strain ATCC BAA-680 / CLIP 11262).